Reading from the N-terminus, the 1217-residue chain is WD repeat-containing protein on Y chromosome (1217 aa).

8 WD repeats span residues 155-199 (EDMT…LRSA), 323-362 (RIPL…EPSA), 366-405 (GHNG…LLQT), 456-495 (THAA…RKII), 508-547 (TIDI…VVRN), 595-635 (FHTD…RRYN), 740-779 (KVGD…IPEA), and 823-862 (GHLK…LGTL). 2 disordered regions span residues 910–929 (QVKR…VEDT) and 1033–1217 (AGGQ…KDKP). Over residues 919–929 (EREDEGEVEDT) the composition is skewed to acidic residues. Composition is skewed to polar residues over residues 1041–1054 (RASS…TNSI), 1085–1107 (FGPN…SQLK), and 1137–1179 (PVST…TSAN). Low complexity predominate over residues 1181–1190 (KPDIMPVKIK). A compositionally biased stretch (polar residues) spans 1198-1210 (RNTAPVQITTSIA).

In Drosophila mojavensis (Fruit fly), this protein is WD repeat-containing protein on Y chromosome.